We begin with the raw amino-acid sequence, 80 residues long: uncharacterized protein (80 aa).

In terms of biological role, essential for virus function. This is an uncharacterized protein from Sulfolobus spindle-shape virus 1 (SSV1).